A 281-amino-acid chain; its full sequence is Pantothenate synthetase (281 aa).

Position 30 to 37 (30 to 37) interacts with ATP; it reads MGNLHQGH. The active-site Proton donor is His-37. Gln-61 serves as a coordination point for (R)-pantoate. Gln-61 lines the beta-alanine pocket. 149–152 is an ATP binding site; sequence GNKD. Position 155 (Gln-155) interacts with (R)-pantoate. ATP is bound by residues Ile-178 and 186-189; that span reads MSSR.

The protein belongs to the pantothenate synthetase family. In terms of assembly, homodimer.

The protein localises to the cytoplasm. It carries out the reaction (R)-pantoate + beta-alanine + ATP = (R)-pantothenate + AMP + diphosphate + H(+). It functions in the pathway cofactor biosynthesis; (R)-pantothenate biosynthesis; (R)-pantothenate from (R)-pantoate and beta-alanine: step 1/1. In terms of biological role, catalyzes the condensation of pantoate with beta-alanine in an ATP-dependent reaction via a pantoyl-adenylate intermediate. This is Pantothenate synthetase from Shewanella baltica (strain OS155 / ATCC BAA-1091).